A 495-amino-acid chain; its full sequence is Myocyte-specific enhancer factor 2A (495 aa).

The MADS-box domain occupies 3-57 (RKKIQITRIMDERNRQVTFTKRKFGLMKKAYELSVLCDCEIALIIFNSSNKLFQY). Positions 58 to 86 (ASTDMDKVLLKYTEYNEPHESRTNSDIVE) form a DNA-binding region, mef2-type. S59 bears the Phosphoserine; by CK2 mark. S98 is modified (phosphoserine). The interval 175–225 (AESSMLSPPPATLHRNVSPGAPQRPPSTGSAGGMLSTTDLTVPNGAGNGPV) is disordered. The residue at position 235 (S235) is a Phosphoserine. The segment at 242–271 (TGANSVGKVMPTKSPPPPGGGSVGMNSRKP) is disordered. K249 carries the N6-acetyllysine modification. S255 is subject to Phosphoserine. The interval 266 to 283 (MNSRKPDLRVVIPPSSKG) is required for interaction with MAPKs. Phosphothreonine; by MAPK7 and MAPK14 is present on residues T304 and T311. S347 carries the phosphoserine; by MAPK7 modification. Residues 382–394 (SNLSINTNQNINI) are compositionally biased toward polar residues. The interval 382-495 (SNLSINTNQN…KRMRMDTWVT (114 aa)) is disordered. The residue at position 395 (K395) is an N6-acetyllysine; alternate. Residue K395 forms a Glycyl lysine isopeptide (Lys-Gly) (interchain with G-Cter in SUMO); alternate linkage. S400 is modified (phosphoserine; by CDK5). T407 is modified (phosphothreonine). A compositionally biased stretch (pro residues) spans 421–433 (QQPPPQPPQPQPQ). Position 441 is a phosphoserine (S441). Residues 441 to 454 (SPVDSLSSSSSSYD) are compositionally biased toward low complexity. 2 stretches are compositionally biased toward basic and acidic residues: residues 455 to 465 (GSDREDPRGDF) and 476 to 495 (NAED…TWVT).

As to quaternary structure, binds DNA as a homo- or heterodimer. Dimerizes with MEF2D. Interacts with HDAC7. Interacts with PIAS1; the interaction enhances sumoylation. Interacts with HDAC4, HDAC9 and SLC2A4RG. Interacts (via the N-terminal) with MAPK7; the interaction results in the phosphorylation and transcriptional activity of MEF2A. In terms of processing, constitutive phosphorylation on Ser-400 promotes Lys-395 sumoylation thus preventing acetylation at this site. Dephosphorylation on Ser-400 by PPP3CA upon neuron depolarization promotes a switch from sumoylation to acetylation on residue Lys-395 leading to inhibition of dendrite claw differentiation. Phosphorylation on Thr-304 and Thr-311 are the main sites involved in p38 MAPK signaling and activate transcription. Phosphorylated on these sites by MAPK14/p38alpha and MAPK11/p38beta, but not by MAPK13/p38delta nor by MAPK12/p38gamma. Phosphorylation on Ser-400 by CDK5 induced by neurotoxicity inhibits MEF2A transcriptional activation leading to apoptosis of cortical neurons. Phosphorylation on Thr-304, Thr-311 and Ser-347 can be induced by EGF. Post-translationally, sumoylation on Lys-395 is enhanced by PIAS1 and represses transcriptional activity. Phosphorylation on Ser-400 is required for sumoylation. Has no effect on nuclear location nor on DNA binding. Sumoylated with SUMO1 and, to a lesser extent with SUMO2 and SUMO3. PIASx facilitates sumoylation in postsynaptic dendrites in the cerebellar cortex and promotes their morphogenesis. Acetylation on Lys-395 activates transcriptional activity. Acetylated by p300 on several sites in diffentiating myocytes. Acetylation on Lys-4 increases DNA binding and transactivation. Hyperacetylation by p300 leads to enhanced cardiac myocyte growth and heart failure. In terms of processing, proteolytically cleaved in cerebellar granule neurons on several sites by caspase 3 and caspase 7 following neurotoxicity. Preferentially cleaves the CDK5-mediated hyperphosphorylated form which leads to neuron apoptosis and transcriptional inactivation.

The protein resides in the nucleus. Its function is as follows. Transcriptional activator which binds specifically to the MEF2 element, 5'-YTA[AT](4)TAR-3', found in numerous muscle-specific genes. Also involved in the activation of numerous growth factor- and stress-induced genes. Mediates cellular functions not only in skeletal and cardiac muscle development, but also in neuronal differentiation and survival. Plays diverse roles in the control of cell growth, survival and apoptosis via p38 MAPK signaling in muscle-specific and/or growth factor-related transcription. In cerebellar granule neurons, phosphorylated and sumoylated MEF2A represses transcription of NUR77 promoting synaptic differentiation. Associates with chromatin to the ZNF16 promoter. The chain is Myocyte-specific enhancer factor 2A (Mef2a) from Rattus norvegicus (Rat).